Here is an 81-residue protein sequence, read N- to C-terminus: Small cysteine-rich protein 4 (81 aa).

A signal peptide spans 1-23; the sequence is MDTKVACLLLIILGALTVQGAVS. Residues 24–25 constitute a propeptide that is removed on maturation; sequence GN.

Belongs to the Cnidaria small cysteine-rich protein (SCRiP) family. beta subfamily. In terms of processing, contains 4 disulfide bonds.

The protein localises to the secreted. Its subcellular location is the nematocyst. In terms of biological role, induces neurotoxic symptoms on zebrafish. Has also been claimed to be implied in calcification, but tests on homolog proteins suggest that proteins of this family have a neurotoxic function and not a calcification function. The protein is Small cysteine-rich protein 4 of Orbicella faveolata (Mountainous star coral).